Consider the following 729-residue polypeptide: Fatty acid oxidation complex subunit alpha (729 aa).

The tract at residues M1–K189 is enoyl-CoA hydratase/isomerase. D296 is a binding site for substrate. Residues E311–A729 form a 3-hydroxyacyl-CoA dehydrogenase region. Residues M324, D343, V400–E402, K407, and S429 each bind NAD(+). H450 acts as the For 3-hydroxyacyl-CoA dehydrogenase activity in catalysis. N453 is a binding site for NAD(+). Positions 500 and 660 each coordinate substrate. The tract at residues R708–A729 is disordered.

The protein in the N-terminal section; belongs to the enoyl-CoA hydratase/isomerase family. In the C-terminal section; belongs to the 3-hydroxyacyl-CoA dehydrogenase family. In terms of assembly, heterotetramer of two alpha chains (FadB) and two beta chains (FadA).

It catalyses the reaction a (3S)-3-hydroxyacyl-CoA + NAD(+) = a 3-oxoacyl-CoA + NADH + H(+). The catalysed reaction is a (3S)-3-hydroxyacyl-CoA = a (2E)-enoyl-CoA + H2O. The enzyme catalyses a 4-saturated-(3S)-3-hydroxyacyl-CoA = a (3E)-enoyl-CoA + H2O. It carries out the reaction (3S)-3-hydroxybutanoyl-CoA = (3R)-3-hydroxybutanoyl-CoA. It catalyses the reaction a (3Z)-enoyl-CoA = a 4-saturated (2E)-enoyl-CoA. The catalysed reaction is a (3E)-enoyl-CoA = a 4-saturated (2E)-enoyl-CoA. The protein operates within lipid metabolism; fatty acid beta-oxidation. Involved in the aerobic and anaerobic degradation of long-chain fatty acids via beta-oxidation cycle. Catalyzes the formation of 3-oxoacyl-CoA from enoyl-CoA via L-3-hydroxyacyl-CoA. It can also use D-3-hydroxyacyl-CoA and cis-3-enoyl-CoA as substrate. In Escherichia coli O7:K1 (strain IAI39 / ExPEC), this protein is Fatty acid oxidation complex subunit alpha.